A 159-amino-acid polypeptide reads, in one-letter code: 2-C-methyl-D-erythritol 2,4-cyclodiphosphate synthase (159 aa).

The a divalent metal cation site is built by D8 and H10. 4-CDP-2-C-methyl-D-erythritol 2-phosphate contacts are provided by residues 8–10 (DVH) and 34–35 (HS). H42 provides a ligand contact to a divalent metal cation. Residues 56–58 (DIG), 61–65 (FPDTD), 100–106 (AQAPKML), 132–135 (TTTE), F139, and R142 contribute to the 4-CDP-2-C-methyl-D-erythritol 2-phosphate site.

Belongs to the IspF family. As to quaternary structure, homotrimer. Requires a divalent metal cation as cofactor.

It catalyses the reaction 4-CDP-2-C-methyl-D-erythritol 2-phosphate = 2-C-methyl-D-erythritol 2,4-cyclic diphosphate + CMP. The protein operates within isoprenoid biosynthesis; isopentenyl diphosphate biosynthesis via DXP pathway; isopentenyl diphosphate from 1-deoxy-D-xylulose 5-phosphate: step 4/6. Functionally, involved in the biosynthesis of isopentenyl diphosphate (IPP) and dimethylallyl diphosphate (DMAPP), two major building blocks of isoprenoid compounds. Catalyzes the conversion of 4-diphosphocytidyl-2-C-methyl-D-erythritol 2-phosphate (CDP-ME2P) to 2-C-methyl-D-erythritol 2,4-cyclodiphosphate (ME-CPP) with a corresponding release of cytidine 5-monophosphate (CMP). This Escherichia coli O139:H28 (strain E24377A / ETEC) protein is 2-C-methyl-D-erythritol 2,4-cyclodiphosphate synthase.